We begin with the raw amino-acid sequence, 119 residues long: Large ribosomal subunit protein bL20 (119 aa).

The protein belongs to the bacterial ribosomal protein bL20 family.

Its function is as follows. Binds directly to 23S ribosomal RNA and is necessary for the in vitro assembly process of the 50S ribosomal subunit. It is not involved in the protein synthesizing functions of that subunit. The chain is Large ribosomal subunit protein bL20 from Acidithiobacillus ferrooxidans (strain ATCC 23270 / DSM 14882 / CIP 104768 / NCIMB 8455) (Ferrobacillus ferrooxidans (strain ATCC 23270)).